A 203-amino-acid chain; its full sequence is Fucoxanthin-chlorophyll a-c binding protein, chloroplastic (203 aa).

The N-terminal 30 residues, 1-30 (MKLAIAALLAGSAAAFAPAQSGKASTALNM), are a transit peptide targeting the chloroplast.

It belongs to the fucoxanthin chlorophyll protein family. In terms of assembly, the LHC complex of chromophytic algae is composed of fucoxanthin, chlorophyll A and C bound non-covalently by fucoxanthin chlorophyll proteins (FCPs). The ratio of pigments in this LHC is; fucoxanthin: chlorophyll C: chlorophyll A; (0.6-1): (0.1-0.3): (1).

It localises to the plastid. It is found in the chloroplast thylakoid membrane. In terms of biological role, the light-harvesting complex (LHC) functions as a light receptor, it captures and delivers excitation energy to photosystems with which it is closely associated. Energy is transferred from the carotenoid and chlorophyll C (or B) to chlorophyll A and the photosynthetic reaction centers where it is used to synthesize ATP and reducing power. The sequence is that of Fucoxanthin-chlorophyll a-c binding protein, chloroplastic (FCPA) from Trieres chinensis (Marine centric diatom).